Reading from the N-terminus, the 87-residue chain is Acyl-CoA-binding protein (87 aa).

At Ser-2 the chain carries N-acetylserine. The 86-residue stretch at 2-87 (SQAEFDKAAE…VEELKKKYGI (86 aa)) folds into the ACB domain. N6-acetyllysine; alternate is present on Lys-8. Lys-8 carries the N6-succinyllysine; alternate modification. An acyl-CoA is bound at residue Lys-14. Lys-17 is subject to N6-succinyllysine. An N6-acetyllysine modification is found at Lys-19. Tyr-29 bears the Phosphotyrosine mark. Residues 29-33 (YSHYK), Lys-51, Lys-55, and Tyr-74 each bind an acyl-CoA. At Lys-51 the chain carries N6-acetyllysine. Residue Lys-55 is modified to N6-acetyllysine; alternate. Lys-55 carries the post-translational modification N6-succinyllysine; alternate. Lys-55 carries the N6-(2-hydroxyisobutyryl)lysine; alternate modification. The residue at position 55 (Lys-55) is an N6-malonyllysine; alternate. Lys-77 carries the N6-acetyllysine; alternate modification. The residue at position 77 (Lys-77) is an N6-succinyllysine; alternate.

Belongs to the ACBP family. Monomer.

It localises to the endoplasmic reticulum. The protein resides in the golgi apparatus. Functionally, binds medium- and long-chain acyl-CoA esters with very high affinity and may function as an intracellular carrier of acyl-CoA esters. This chain is Acyl-CoA-binding protein (DBI), found in Chaetophractus villosus (South American armadillo).